We begin with the raw amino-acid sequence, 481 residues long: uncharacterized protein (481 aa).

This is an uncharacterized protein from Cryphonectria parasitica (Chestnut blight fungus).